Consider the following 519-residue polypeptide: NADH-ubiquinone oxidoreductase chain 4 (519 aa).

A run of 14 helical transmembrane segments spans residues 2-22, 68-88, 112-132, 146-166, 167-187, 196-216, 239-259, 270-290, 304-324, 333-353, 360-380, 399-419, 437-457, and 484-504; these read SGLL…ILSF, IAFI…ILFD, VDGL…IALI, LIII…LDVL, LFYI…GLFG, FYIF…ILTM, IFLF…VFLN, PLGG…YGIF, YTSI…FSTL, IAYS…SNII, ILLG…AGGV, VMPL…GAPL, LPLL…YTIY, and FFLL…PSFI.

The protein belongs to the complex I subunit 4 family.

It localises to the mitochondrion membrane. It carries out the reaction a ubiquinone + NADH + 5 H(+)(in) = a ubiquinol + NAD(+) + 4 H(+)(out). Its function is as follows. Core subunit of the mitochondrial membrane respiratory chain NADH dehydrogenase (Complex I) that is believed to belong to the minimal assembly required for catalysis. Complex I functions in the transfer of electrons from NADH to the respiratory chain. The immediate electron acceptor for the enzyme is believed to be ubiquinone. This Podospora anserina (strain S / ATCC MYA-4624 / DSM 980 / FGSC 10383) (Pleurage anserina) protein is NADH-ubiquinone oxidoreductase chain 4 (ND4).